The sequence spans 177 residues: Large ribosomal subunit protein uL6 (177 aa).

It belongs to the universal ribosomal protein uL6 family. As to quaternary structure, part of the 50S ribosomal subunit.

This protein binds to the 23S rRNA, and is important in its secondary structure. It is located near the subunit interface in the base of the L7/L12 stalk, and near the tRNA binding site of the peptidyltransferase center. The polypeptide is Large ribosomal subunit protein uL6 (Aliivibrio salmonicida (strain LFI1238) (Vibrio salmonicida (strain LFI1238))).